The primary structure comprises 830 residues: Post-transcriptional regulator MKT1 (830 aa).

Lys4 participates in a covalent cross-link: Glycyl lysine isopeptide (Lys-Gly) (interchain with G-Cter in ubiquitin). The interval Arg130–Ala380 is interaction with PBP1. The disordered stretch occupies residues Asp347 to Ile400. Ser358, Ser362, and Ser371 each carry phosphoserine. A compositionally biased stretch (low complexity) spans Ser361 to Ala373. Over residues Ala380 to Ile400 the composition is skewed to basic and acidic residues.

The protein belongs to the XPG/RAD2 endonuclease family. Interacts (via C-terminus) with PBP1 (via C-terminus).

Its subcellular location is the cytoplasm. The protein resides in the cytosol. Its function is as follows. Involved in 3'-UTR mediated RNA regulation. Binds to RNA-binding and RNA regulatory proteins. Complexes with PAB1-binding protein to promote mRNA interactions with poly(A)-binding protein. Promotes mating-type switching in mother cells by positively regulating HO expression. The polypeptide is Post-transcriptional regulator MKT1 (MKT1) (Saccharomyces cerevisiae (strain ATCC 204508 / S288c) (Baker's yeast)).